Reading from the N-terminus, the 217-residue chain is Large ribosomal subunit protein uL29m (217 aa).

Belongs to the universal ribosomal protein uL29 family. In terms of assembly, component of the mitochondrial large ribosomal subunit. Mature mitochondrial ribosomes consist of a small (37S) and a large (54S) subunit. The 37S subunit contains at least 33 different proteins and 1 molecule of RNA (15S). The 54S subunit contains at least 45 different proteins and 1 molecule of RNA (21S).

Its subcellular location is the mitochondrion. The polypeptide is Large ribosomal subunit protein uL29m (mrpl4) (Aspergillus fumigatus (strain ATCC MYA-4609 / CBS 101355 / FGSC A1100 / Af293) (Neosartorya fumigata)).